The chain runs to 480 residues: Cytochrome b-c1 complex subunit 1, mitochondrial (480 aa).

A mitochondrion-targeting transit peptide spans 1-34; sequence MAASAVCRAAGAGTRVLLRTRRSPALLRSSDLRG. An N6-acetyllysine mark is found at Lys-111 and Lys-138. An N6-acetyllysine; alternate modification is found at Lys-163. Residue Lys-163 is modified to N6-succinyllysine; alternate. A Phosphoserine modification is found at Ser-212. Lys-248 bears the N6-acetyllysine mark.

It belongs to the peptidase M16 family. UQCRC1/QCR1 subfamily. Component of the ubiquinol-cytochrome c oxidoreductase (cytochrome b-c1 complex, complex III, CIII), a multisubunit enzyme composed of 11 subunits. The complex is composed of 3 respiratory subunits cytochrome b, cytochrome c1 and Rieske protein UQCRFS1, 2 core protein subunits UQCRC1/QCR1 and UQCRC2/QCR2, and 6 low-molecular weight protein subunits UQCRH/QCR6, UQCRB/QCR7, UQCRQ/QCR8, UQCR10/QCR9, UQCR11/QCR10 and subunit 9, the cleavage product of Rieske protein UQCRFS1. The complex exists as an obligatory dimer and forms supercomplexes (SCs) in the inner mitochondrial membrane with NADH-ubiquinone oxidoreductase (complex I, CI) and cytochrome c oxidase (complex IV, CIV), resulting in different assemblies (supercomplex SCI(1)III(2)IV(1) and megacomplex MCI(2)III(2)IV(2)). Interacts with UQCC6. Interacts with STMP1.

The protein resides in the mitochondrion inner membrane. Functionally, component of the ubiquinol-cytochrome c oxidoreductase, a multisubunit transmembrane complex that is part of the mitochondrial electron transport chain which drives oxidative phosphorylation. The respiratory chain contains 3 multisubunit complexes succinate dehydrogenase (complex II, CII), ubiquinol-cytochrome c oxidoreductase (cytochrome b-c1 complex, complex III, CIII) and cytochrome c oxidase (complex IV, CIV), that cooperate to transfer electrons derived from NADH and succinate to molecular oxygen, creating an electrochemical gradient over the inner membrane that drives transmembrane transport and the ATP synthase. The cytochrome b-c1 complex catalyzes electron transfer from ubiquinol to cytochrome c, linking this redox reaction to translocation of protons across the mitochondrial inner membrane, with protons being carried across the membrane as hydrogens on the quinol. In the process called Q cycle, 2 protons are consumed from the matrix, 4 protons are released into the intermembrane space and 2 electrons are passed to cytochrome c. The 2 core subunits UQCRC1/QCR1 and UQCRC2/QCR2 are homologous to the 2 mitochondrial-processing peptidase (MPP) subunits beta-MPP and alpha-MPP respectively, and they seem to have preserved their MPP processing properties. May be involved in the in situ processing of UQCRFS1 into the mature Rieske protein and its mitochondrial targeting sequence (MTS)/subunit 9 when incorporated into complex III. Seems to play an important role in the maintenance of proper mitochondrial function in nigral dopaminergic neurons. This Bos taurus (Bovine) protein is Cytochrome b-c1 complex subunit 1, mitochondrial (UQCRC1).